Consider the following 189-residue polypeptide: MPLVELLTSAALGLSLQLLHDAIIRAKERSLITRCILDRLDATLHKITPFVIKIDTLTEEVDEPFRKVIEELKRLLEKAIRLVDAYAELKLRNLLRKYRYKRRIKELDSSLRWMIDVDVQVNQWLDIKKLMGKMSEMNTKLDDITRQPMDIIEATGRSSEEDGCTKPTIDIHFRWKNQTKEHEIRFIFK.

The region spanning 1–153 (MPLVELLTSA…ITRQPMDIIE (153 aa)) is the RPW8 domain. The chain crosses the membrane as a helical span at residues 7–24 (LTSAALGLSLQLLHDAII). 2 coiled-coil regions span residues 65-92 (FRKVIEELKRLLEKAIRLVDAYAELKLR) and 126-147 (DIKKLMGKMSEMNTKLDDITRQ). Asn177 carries an N-linked (GlcNAc...) asparagine glycan.

The protein belongs to the plant RPW8 protein family.

It localises to the membrane. Its function is as follows. Probable disease resistance (R) protein. This chain is RPW8-like protein 1, found in Arabidopsis thaliana (Mouse-ear cress).